Here is a 173-residue protein sequence, read N- to C-terminus: Large ribosomal subunit protein uL10 (173 aa).

This sequence belongs to the universal ribosomal protein uL10 family. In terms of assembly, part of the ribosomal stalk of the 50S ribosomal subunit. The N-terminus interacts with L11 and the large rRNA to form the base of the stalk. The C-terminus forms an elongated spine to which L12 dimers bind in a sequential fashion forming a multimeric L10(L12)X complex.

In terms of biological role, forms part of the ribosomal stalk, playing a central role in the interaction of the ribosome with GTP-bound translation factors. The protein is Large ribosomal subunit protein uL10 of Maridesulfovibrio salexigens (strain ATCC 14822 / DSM 2638 / NCIMB 8403 / VKM B-1763) (Desulfovibrio salexigens).